The sequence spans 657 residues: Katanin p80 WD40 repeat-containing subunit B1 (657 aa).

WD repeat units lie at residues 18-58, 61-100, 103-142, 145-184, 187-226, and 229-269; these read AHSS…CVMS, GHTT…ILRT, GHKA…CIFK, SHTQ…VMFE, GHSG…VVSC, and EEAT…DVVV. Disordered stretches follow at residues 318–410 and 423–454; these read NNEL…EDEP and VEVQ…RAEP. Residues 325 to 345 show a composition bias toward polar residues; sequence PTPTGSSLRRSYDRPSTSCSK. A compositionally biased stretch (basic and acidic residues) spans 351-385; that stretch reads HSSESERRSPSSEEDRDEKESKAEIQNPEDYKEIF.

The protein belongs to the WD repeat KATNB1 family. As to quaternary structure, interacts with KATNA1. This interaction enhances the microtubule binding and severing activity of KATNA1 and also targets this activity to the centrosome.

The protein resides in the cytoplasm. It localises to the cytoskeleton. Its subcellular location is the microtubule organizing center. It is found in the centrosome. The protein localises to the spindle pole. The protein resides in the spindle. In terms of biological role, participates in a complex which severs microtubules in an ATP-dependent manner. May act to target the enzymatic subunit of this complex to sites of action such as the centrosome. Microtubule severing may promote rapid reorganization of cellular microtubule arrays and the release of microtubules from the centrosome following nucleation. The chain is Katanin p80 WD40 repeat-containing subunit B1 from Gallus gallus (Chicken).